Reading from the N-terminus, the 416-residue chain is CapZ-interacting protein (416 aa).

2 disordered regions span residues 1-84 (MEER…KSSP) and 98-416 (AALL…DTKM). Positions 8 to 20 (TNANVDNSASPSV) are enriched in polar residues. Ser17 carries the post-translational modification Phosphoserine. A Phosphoserine; by MAPK8; in vitro modification is found at Ser68. A Phosphoserine modification is found at Ser82. A Phosphoserine; by MAPK8; in vitro modification is found at Ser83. Phosphoserine is present on Ser105. Phosphoserine; by MAPK12 and MAPK13 is present on Ser108. 3 positions are modified to phosphoserine: Ser116, Ser120, and Ser123. Thr124 carries the phosphothreonine modification. 4 positions are modified to phosphoserine: Ser126, Ser127, Ser135, and Ser143. Over residues 159 to 176 (VRTRGSIKRRPPSRRFRR) the composition is skewed to basic residues. Ser177 carries the phosphoserine modification. Ser179 carries the post-translational modification Phosphoserine; by MAPKAPK2 and MAPKAPK3. The residue at position 216 (Ser216) is a Phosphoserine; by MAPK8; in vitro. An RCSD domain is found at 227–330 (GVRTLGPAEK…RVQNEEVGPE (104 aa)). Ser244 is modified (phosphoserine; by MAPKAPK2 or MAPKAPK3; in vitro). A compositionally biased stretch (basic and acidic residues) spans 244 to 273 (SRTEKQEEDRATEEAKNGEKARRSSEEVDG). Ser267, Ser268, Ser284, Ser298, and Ser333 each carry phosphoserine. Positions 292 to 349 (AENRCGSPREEKPAGEEAEMEKATEVKGERVQNEEVGPEHDSQETKKLEEGAAVKETP) are enriched in basic and acidic residues. Thr336 is modified (phosphothreonine). Ser351 is subject to Phosphoserine. The span at 360–372 (DVPKQEKGKEKQQ) shows a compositional bias: basic and acidic residues. Residues 382–397 (SPQTGPAQLETSSEVQ) are compositionally biased toward polar residues.

Interacts with CAPZA2 and CAPZB. Post-translationally, dephosphorylation results in its dissociation from CAPZA2. Highly expressed in skeletal muscle and more weakly in cardiac muscle. Also expressed in several lymphoid organs, including spleen, thymus, peripheral blood leukocytes, lymph node and bone marrow.

Its function is as follows. Stress-induced phosphorylation of CAPZIP may regulate the ability of F-actin-capping protein to remodel actin filament assembly. The polypeptide is CapZ-interacting protein (RCSD1) (Homo sapiens (Human)).